The chain runs to 360 residues: Photosystem II protein D1 1 (360 aa).

3 consecutive transmembrane segments (helical) span residues Y29–T46, H118–L133, and W142–A156. A chlorophyll a-binding site is contributed by H118. Y126 contacts pheophytin a. Positions 170 and 189 each coordinate [CaMn4O5] cluster. A helical transmembrane segment spans residues F197–L218. A chlorophyll a-binding site is contributed by H198. A quinone-binding positions include H215 and S264–F265. H215 is a binding site for Fe cation. Residue H272 coordinates Fe cation. Residues F274–L288 form a helical membrane-spanning segment. Residues H332, E333, D342, and A344 each coordinate [CaMn4O5] cluster. A propeptide spanning residues S345 to G360 is cleaved from the precursor.

This sequence belongs to the reaction center PufL/M/PsbA/D family. In terms of assembly, PSII is composed of 1 copy each of membrane proteins PsbA, PsbB, PsbC, PsbD, PsbE, PsbF, PsbH, PsbI, PsbJ, PsbK, PsbL, PsbM, PsbT, PsbX, PsbY, PsbZ, Psb30/Ycf12, peripheral proteins PsbO, CyanoQ (PsbQ), PsbU, PsbV and a large number of cofactors. It forms dimeric complexes. The D1/D2 heterodimer binds P680, chlorophylls that are the primary electron donor of PSII, and subsequent electron acceptors. It shares a non-heme iron and each subunit binds pheophytin, quinone, additional chlorophylls, carotenoids and lipids. D1 provides most of the ligands for the Mn4-Ca-O5 cluster of the oxygen-evolving complex (OEC). There is also a Cl(-1) ion associated with D1 and D2, which is required for oxygen evolution. The PSII complex binds additional chlorophylls, carotenoids and specific lipids. is required as a cofactor. Post-translationally, C-terminally processed by CtpA; processing is essential to allow assembly of the oxygen-evolving complex and photosynthetic growth. In terms of processing, tyr-161 forms a radical intermediate that is referred to as redox-active TyrZ, YZ or Y-Z. C-terminally processed by CtpA; processing is essential to allow assembly of the oxygen-evolving complex and thus photosynthetic growth.

It is found in the cellular thylakoid membrane. It catalyses the reaction 2 a plastoquinone + 4 hnu + 2 H2O = 2 a plastoquinol + O2. In terms of biological role, photosystem II (PSII) is a light-driven water:plastoquinone oxidoreductase that uses light energy to abstract electrons from H(2)O, generating O(2) and a proton gradient subsequently used for ATP formation. It consists of a core antenna complex that captures photons, and an electron transfer chain that converts photonic excitation into a charge separation. The D1/D2 (PsbA/PsbD) reaction center heterodimer binds P680, the primary electron donor of PSII as well as several subsequent electron acceptors. The protein is Photosystem II protein D1 1 of Synechocystis sp. (strain ATCC 27184 / PCC 6803 / Kazusa).